A 412-amino-acid polypeptide reads, in one-letter code: UDP-galactose transporter homolog 1 (412 aa).

The chain crosses the membrane as a helical span at residues 3 to 23 (VLRLAVCISGVYAAFLLWAIA). The tract at residues 31 to 51 (FPSVHPHPHQQPHSPSDPPPG) is disordered. A run of 4 helical transmembrane segments spans residues 58-78 (LFLN…YLSF), 139-159 (LLAL…IGFL), 197-217 (YIVV…AETS), and 222-242 (GGSD…IDGL). N244 carries an N-linked (GlcNAc...) asparagine glycan. A run of 4 helical transmembrane segments spans residues 262-282 (MMFT…VLPL), 325-345 (SALA…LFIF), 355-375 (TLVM…VVVF), and 379-399 (LTKG…VEAG).

The protein belongs to the nucleotide-sugar transporter family. SLC35B subfamily.

The protein resides in the endoplasmic reticulum membrane. Functionally, may be involved in specific transport of UDP-Gal from the cytosol to the Golgi lumen. Involved in the maintenance of optimal conditions for the folding of secretory pathway proteins in the endoplasmic reticulum. The chain is UDP-galactose transporter homolog 1 (HUT1-A) from Cryptococcus neoformans var. neoformans serotype D (strain JEC21 / ATCC MYA-565) (Filobasidiella neoformans).